A 240-amino-acid polypeptide reads, in one-letter code: Uridylate kinase (240 aa).

Residue 13 to 16 (KFSG) coordinates ATP. Gly55 is a binding site for UMP. Gly56 and Arg60 together coordinate ATP. UMP is bound by residues Asp76 and 137-144 (TGNPFFTT). 3 residues coordinate ATP: Thr164, Tyr170, and Asp173.

The protein belongs to the UMP kinase family. Homohexamer.

The protein resides in the cytoplasm. The enzyme catalyses UMP + ATP = UDP + ADP. It participates in pyrimidine metabolism; CTP biosynthesis via de novo pathway; UDP from UMP (UMPK route): step 1/1. Its activity is regulated as follows. Inhibited by UTP. Functionally, catalyzes the reversible phosphorylation of UMP to UDP. This is Uridylate kinase from Helicobacter pylori (strain ATCC 700392 / 26695) (Campylobacter pylori).